The primary structure comprises 95 residues: Putative membrane protein insertion efficiency factor (95 aa).

The protein belongs to the UPF0161 family.

The protein localises to the cell membrane. Functionally, could be involved in insertion of integral membrane proteins into the membrane. This is Putative membrane protein insertion efficiency factor from Lactobacillus delbrueckii subsp. bulgaricus (strain ATCC 11842 / DSM 20081 / BCRC 10696 / JCM 1002 / NBRC 13953 / NCIMB 11778 / NCTC 12712 / WDCM 00102 / Lb 14).